The following is a 183-amino-acid chain: ATP-dependent protease subunit HslV (183 aa).

The active site involves T13. G168, C171, and T174 together coordinate Na(+).

This sequence belongs to the peptidase T1B family. HslV subfamily. A double ring-shaped homohexamer of HslV is capped on each side by a ring-shaped HslU homohexamer. The assembly of the HslU/HslV complex is dependent on binding of ATP.

Its subcellular location is the cytoplasm. The catalysed reaction is ATP-dependent cleavage of peptide bonds with broad specificity.. Allosterically activated by HslU binding. Protease subunit of a proteasome-like degradation complex believed to be a general protein degrading machinery. This chain is ATP-dependent protease subunit HslV, found in Xanthomonas campestris pv. campestris (strain ATCC 33913 / DSM 3586 / NCPPB 528 / LMG 568 / P 25).